A 311-amino-acid chain; its full sequence is Bifunctional protein FolD (311 aa).

Residues 184-186, Ile209, and Ile250 contribute to the NADP(+) site; that span reads GAS.

It belongs to the tetrahydrofolate dehydrogenase/cyclohydrolase family. In terms of assembly, homodimer.

The catalysed reaction is (6R)-5,10-methylene-5,6,7,8-tetrahydrofolate + NADP(+) = (6R)-5,10-methenyltetrahydrofolate + NADPH. The enzyme catalyses (6R)-5,10-methenyltetrahydrofolate + H2O = (6R)-10-formyltetrahydrofolate + H(+). It functions in the pathway one-carbon metabolism; tetrahydrofolate interconversion. Its function is as follows. Catalyzes the oxidation of 5,10-methylenetetrahydrofolate to 5,10-methenyltetrahydrofolate and then the hydrolysis of 5,10-methenyltetrahydrofolate to 10-formyltetrahydrofolate. The protein is Bifunctional protein FolD of Gluconacetobacter diazotrophicus (strain ATCC 49037 / DSM 5601 / CCUG 37298 / CIP 103539 / LMG 7603 / PAl5).